We begin with the raw amino-acid sequence, 475 residues long: Aspartyl/glutamyl-tRNA(Asn/Gln) amidotransferase subunit B (475 aa).

Belongs to the GatB/GatE family. GatB subfamily. As to quaternary structure, heterotrimer of A, B and C subunits.

It catalyses the reaction L-glutamyl-tRNA(Gln) + L-glutamine + ATP + H2O = L-glutaminyl-tRNA(Gln) + L-glutamate + ADP + phosphate + H(+). The catalysed reaction is L-aspartyl-tRNA(Asn) + L-glutamine + ATP + H2O = L-asparaginyl-tRNA(Asn) + L-glutamate + ADP + phosphate + 2 H(+). Its function is as follows. Allows the formation of correctly charged Asn-tRNA(Asn) or Gln-tRNA(Gln) through the transamidation of misacylated Asp-tRNA(Asn) or Glu-tRNA(Gln) in organisms which lack either or both of asparaginyl-tRNA or glutaminyl-tRNA synthetases. The reaction takes place in the presence of glutamine and ATP through an activated phospho-Asp-tRNA(Asn) or phospho-Glu-tRNA(Gln). The polypeptide is Aspartyl/glutamyl-tRNA(Asn/Gln) amidotransferase subunit B (Staphylococcus aureus (strain COL)).